A 634-amino-acid polypeptide reads, in one-letter code: MFSRLVLLRKVSISLGRYYSSQAHPQTYIYNLLSKSKCRSCGIQLQDKYPDKPGFYRLPGQNDNNTDNKSKTSELNKKYEKILQNLDVSDRNLLINNFSAPKQEHEKITSVPSLQQVTPVEEDACDTLEVQKTQQGQSLSCKRCNDVIYNSKNKSVYDPKRDNLNKSEFPIPKLQQVLSTIPIDAPLVYVFSANDFPMGINQEIFQYRPPQQIFFVMTKSDILIPKTNVAFYNNFKKFLQNYMFKRFNVPRENVFIASGKDRWKMNDLYHFIPNYAYIIGDTNCGKSTLVKSLLINHHVKHWKYEARQQRQNERPNGKQSSSASLKNKDFKQLDRLIDSFSSKNGPGTSHIPGFTRDVVPVDIDGIKQLFDVPGFTTNENMQDIFDKLNHKQIARITKGTSTFKYGSLKSKFDTIKNGQVLSLNGVGYLQFPGQDSMYQIRNVTRFALHKFKNLEKVDSILQRNEIPTSMSSHFIVNRQQQQQQRNEIRGYYKRYIVPPFYGTIDLVIKDIGYINIKPTGKKLTNELMVLYLHPSLEAIIRQPILNYIDPPSPKKLIDGTKMKSFITSDIGKTPFYSRLIPSKIPSDPSSFLASSPSSDYNQLNQYLQIDESSESAYNDILELDETNKYDYWIE.

A mitochondrion-targeting transit peptide spans 1–40 (MFSRLVLLRKVSISLGRYYSSQAHPQTYIYNLLSKSKCRS). Residues 171 to 378 (IPKLQQVLST…LFDVPGFTTN (208 aa)) form the CP-type G domain.

The protein belongs to the TRAFAC class YlqF/YawG GTPase family. GEP3 subfamily.

It is found in the mitochondrion. In terms of biological role, may be involved in the mitochondrial lipid metabolism. The sequence is that of Genetic interactor of prohibitins 3, mitochondrial (GEP3) from Candida dubliniensis (strain CD36 / ATCC MYA-646 / CBS 7987 / NCPF 3949 / NRRL Y-17841) (Yeast).